Reading from the N-terminus, the 388-residue chain is Pepsin A-1 (388 aa).

The first 15 residues, 1–15 (MKWLLLLGLVALSEC), serve as a signal peptide directing secretion. Propeptides (activation peptide) lie at residues 16-40 (IIYKVPLVRKKSLRRNLSEHGLLKD) and 41-62 (FLKKHNLNPASKYFPQAEAPTL). The 310-residue stretch at 76 to 385 (YFGTIGIGTP…DRANNQVGLA (310 aa)) folds into the Peptidase A1 domain. Residue Asp94 is part of the active site. The cysteines at positions 107 and 112 are disulfide-linked. Ser130 is subject to Phosphoserine. Cys268 and Cys272 are joined by a disulfide. Asp277 is a catalytic residue. Cys311 and Cys344 are joined by a disulfide.

This sequence belongs to the peptidase A1 family. Each pepsinogen is converted to corresponding pepsin at pH 2.0 in part as a result of the release of a 47 AA activation segment and in part as a result of stepwise proteolytic cleavage via an intermediate form(s).

It is found in the secreted. The catalysed reaction is Preferential cleavage: hydrophobic, preferably aromatic, residues in P1 and P1' positions. Cleaves 1-Phe-|-Val-2, 4-Gln-|-His-5, 13-Glu-|-Ala-14, 14-Ala-|-Leu-15, 15-Leu-|-Tyr-16, 16-Tyr-|-Leu-17, 23-Gly-|-Phe-24, 24-Phe-|-Phe-25 and 25-Phe-|-Tyr-26 bonds in the B chain of insulin.. Functionally, shows particularly broad specificity; although bonds involving phenylalanine and leucine are preferred, many others are also cleaved to some extent. The sequence is that of Pepsin A-1 (PGA) from Macaca fuscata fuscata (Japanese macaque).